The sequence spans 163 residues: ATP synthase subunit b', chloroplastic (163 aa).

Residues 26 to 46 (ATLPLMALQFILLTVILTFVF) traverse the membrane as a helical segment.

The protein belongs to the ATPase B chain family. F-type ATPases have 2 components, F(1) - the catalytic core - and F(0) - the membrane proton channel. F(1) has five subunits: alpha(3), beta(3), gamma(1), delta(1), epsilon(1). F(0) has four main subunits: a(1), b(1), b'(1) and c(10-14). The alpha and beta chains form an alternating ring which encloses part of the gamma chain. F(1) is attached to F(0) by a central stalk formed by the gamma and epsilon chains, while a peripheral stalk is formed by the delta, b and b' chains.

The protein resides in the plastid. It is found in the chloroplast thylakoid membrane. In terms of biological role, f(1)F(0) ATP synthase produces ATP from ADP in the presence of a proton or sodium gradient. F-type ATPases consist of two structural domains, F(1) containing the extramembraneous catalytic core and F(0) containing the membrane proton channel, linked together by a central stalk and a peripheral stalk. During catalysis, ATP synthesis in the catalytic domain of F(1) is coupled via a rotary mechanism of the central stalk subunits to proton translocation. Functionally, component of the F(0) channel, it forms part of the peripheral stalk, linking F(1) to F(0). The b'-subunit is a diverged and duplicated form of b found in plants and photosynthetic bacteria. This is ATP synthase subunit b', chloroplastic from Ochrosphaera neapolitana.